The following is a 564-amino-acid chain: NAD-dependent malic enzyme (564 aa).

The active-site Proton donor is the tyrosine 104. Arginine 157 is an NAD(+) binding site. Lysine 175 acts as the Proton acceptor in catalysis. Residues glutamate 246, aspartate 247, and aspartate 270 each contribute to the a divalent metal cation site. Aspartate 270 and asparagine 417 together coordinate NAD(+).

This sequence belongs to the malic enzymes family. In terms of assembly, homotetramer. Requires Mg(2+) as cofactor. The cofactor is Mn(2+).

It carries out the reaction (S)-malate + NAD(+) = pyruvate + CO2 + NADH. The catalysed reaction is oxaloacetate + H(+) = pyruvate + CO2. The protein is NAD-dependent malic enzyme of Aeromonas hydrophila subsp. hydrophila (strain ATCC 7966 / DSM 30187 / BCRC 13018 / CCUG 14551 / JCM 1027 / KCTC 2358 / NCIMB 9240 / NCTC 8049).